A 621-amino-acid chain; its full sequence is 1-deoxy-D-xylulose-5-phosphate synthase (621 aa).

Thiamine diphosphate is bound by residues histidine 80 and 121–123 (GHS). Aspartate 152 is a binding site for Mg(2+). Thiamine diphosphate is bound by residues 153–154 (GA), asparagine 181, tyrosine 288, and glutamate 370. Asparagine 181 contacts Mg(2+).

The protein belongs to the transketolase family. DXPS subfamily. Homodimer. Requires Mg(2+) as cofactor. Thiamine diphosphate is required as a cofactor.

The enzyme catalyses D-glyceraldehyde 3-phosphate + pyruvate + H(+) = 1-deoxy-D-xylulose 5-phosphate + CO2. It functions in the pathway metabolic intermediate biosynthesis; 1-deoxy-D-xylulose 5-phosphate biosynthesis; 1-deoxy-D-xylulose 5-phosphate from D-glyceraldehyde 3-phosphate and pyruvate: step 1/1. Its function is as follows. Catalyzes the acyloin condensation reaction between C atoms 2 and 3 of pyruvate and glyceraldehyde 3-phosphate to yield 1-deoxy-D-xylulose-5-phosphate (DXP). The protein is 1-deoxy-D-xylulose-5-phosphate synthase of Vibrio campbellii (strain ATCC BAA-1116).